The following is a 125-amino-acid chain: Small ribosomal subunit protein uS13 (125 aa).

The protein belongs to the universal ribosomal protein uS13 family. In terms of assembly, part of the 30S ribosomal subunit. Forms a loose heterodimer with protein S19. Forms two bridges to the 50S subunit in the 70S ribosome.

Its function is as follows. Located at the top of the head of the 30S subunit, it contacts several helices of the 16S rRNA. In the 70S ribosome it contacts the 23S rRNA (bridge B1a) and protein L5 of the 50S subunit (bridge B1b), connecting the 2 subunits; these bridges are implicated in subunit movement. Contacts the tRNAs in the A and P-sites. The chain is Small ribosomal subunit protein uS13 from Granulibacter bethesdensis (strain ATCC BAA-1260 / CGDNIH1).